Consider the following 405-residue polypeptide: MDTDKLISEAESHFSQGNHAEAVAKLTSAAQSNPNDEQMSTIESLIQKIAGYVMDNRSGGSDASQDRAAGGGSSFMNTLMADSKGSSQTQLGKLALLATVMTHSSNKGSSNRGFDVGTVMSMLSGSGGGSQSMGASGLAALASQFFKSGNNSQGQGQGQGQGQGQGQGQGQGSFTALASLASSFMNSNNNNQQGQNQSSGGSSFGALASMASSFMHSNNNQNSNNSQQGYNQSYQNGNQNSQGYNNQQYQGGNGGYQQQQGQSGGAFSSLASMAQSYLGGGQTQSNQQQYNQQGQNNQQQYQQQGQNYQHQQQGQQQQQGHSSSFSALASMASSYLGNNSNSNSSYGGQQQANEYGRPQQNGQQQSNEYGRPQYGGNQNSNGQHESFNFSGNFSQQNNNGNQNRY.

Glycyl lysine isopeptide (Lys-Gly) (interchain with G-Cter in ubiquitin) cross-links involve residues Lys5 and Lys84. Ser143 is subject to Phosphoserine. 2 disordered regions span residues 149–172 (GNNS…QGQG) and 185–405 (MNSN…QNRY). The tract at residues 153–402 (QGQGQGQGQG…FSQQNNNGNQ (250 aa)) is prion domain (PrD). Residues 155–171 (QGQGQGQGQGQGQGQGQ) show a composition bias toward gly residues. 2 stretches are compositionally biased toward low complexity: residues 185–261 (MNSN…QQQG) and 283–353 (TQSN…QQAN). Composition is skewed to polar residues over residues 358-368 (PQQNGQQQSNE) and 375-385 (GGNQNSNGQHE). A compositionally biased stretch (low complexity) spans 386–405 (SFNFSGNFSQQNNNGNQNRY).

It is found in the cytoplasm. It localises to the nucleus. In terms of biological role, transferable epigenetic modifier which forms a prion responsible for the non-Mendelian trait [PIN+]. The native function of the soluble protein is unknown. In Saccharomyces cerevisiae (strain ATCC 204508 / S288c) (Baker's yeast), this protein is [PIN+] prion protein RNQ1 (RNQ1).